Reading from the N-terminus, the 417-residue chain is Pelargonidin 3-O-(6-caffeoylglucoside) 5-O-(6-O-malonylglucoside) 4'''-malonyltransferase (417 aa).

Catalysis depends on proton acceptor residues His-147 and Asp-360.

Belongs to the plant acyltransferase family. As to quaternary structure, monomer. As to expression, expressed at higher level in recently opened, fully pigmented flowers.

It catalyses the reaction 4'''-demalonylsalvianin + malonyl-CoA = salvianin + CoA. It participates in pigment biosynthesis; anthocyanin biosynthesis. With respect to regulation, inhibited by the following metal ions: Cd(2+), Cu(2+), Fe(2+), Hg(2+) and Zn(2+). Activity is strongly inhibited by CoA-SH and partially inhibited by acetyl-CoA, caffeic acid and bisdemalonylsalvianin. Its function is as follows. Catalyzes the transfer of the malonyl group from malonyl-CoA to the 4'''-hydroxyl group of the 5-glucosyl moiety of anthocyanins. Anthocyanins are ubiquitous colored pigments that are responsible for petal color. This chain is Pelargonidin 3-O-(6-caffeoylglucoside) 5-O-(6-O-malonylglucoside) 4'''-malonyltransferase, found in Salvia splendens (Scarlet sage).